Here is a 184-residue protein sequence, read N- to C-terminus: dITP/XTP pyrophosphatase (184 aa).

7-12 (TSNPGK) provides a ligand contact to substrate. Positions 36 and 65 each coordinate Mg(2+). Asp-65 (proton acceptor) is an active-site residue. Substrate-binding positions include Ser-66, 139–142 (FGFD), Lys-162, and 167–168 (HR).

This sequence belongs to the HAM1 NTPase family. In terms of assembly, homodimer. The cofactor is Mg(2+).

The enzyme catalyses XTP + H2O = XMP + diphosphate + H(+). It carries out the reaction dITP + H2O = dIMP + diphosphate + H(+). It catalyses the reaction ITP + H2O = IMP + diphosphate + H(+). Functionally, pyrophosphatase that catalyzes the hydrolysis of nucleoside triphosphates to their monophosphate derivatives, with a high preference for the non-canonical purine nucleotides XTP (xanthosine triphosphate), dITP (deoxyinosine triphosphate) and ITP. Seems to function as a house-cleaning enzyme that removes non-canonical purine nucleotides from the nucleotide pool, thus preventing their incorporation into DNA/RNA and avoiding chromosomal lesions. The sequence is that of dITP/XTP pyrophosphatase from Thermococcus kodakarensis (strain ATCC BAA-918 / JCM 12380 / KOD1) (Pyrococcus kodakaraensis (strain KOD1)).